The primary structure comprises 95 residues: Large ribosomal subunit protein bL27 (95 aa).

A propeptide spanning residues 1–6 (MFLQLF) is cleaved from the precursor.

The protein belongs to the bacterial ribosomal protein bL27 family. The N-terminus is cleaved by ribosomal processing cysteine protease Prp.

The polypeptide is Large ribosomal subunit protein bL27 (Symbiobacterium thermophilum (strain DSM 24528 / JCM 14929 / IAM 14863 / T)).